Reading from the N-terminus, the 199-residue chain is Early nodulin-like protein 3 (199 aa).

The first 23 residues, 1 to 23 (MGLVMRFDLYLMFVMLMGLGFTI), serve as a signal peptide directing secretion. The Phytocyanin domain maps to 27 to 128 (YKFYVGGKDG…GQKLAVKVLS (102 aa)). N-linked (GlcNAc...) asparagine glycosylation is found at Asn57 and Asn83. An intrachain disulfide couples Cys82 to Cys116. A disordered region spans residues 130 to 180 (VHHSHSPRHTSPSPSPVHQELSSPGPSPGVEPSSDSNSRVPAPGPATAPNS). A compositionally biased stretch (low complexity) spans 138-165 (HTSPSPSPVHQELSSPGPSPGVEPSSDS). The GPI-anchor amidated asparagine moiety is linked to residue Asn179. Residues 180–199 (SAGLVGPGMVVLVIMISSLF) constitute a propeptide, removed in mature form.

Belongs to the early nodulin-like (ENODL) family. As to expression, confined to flowers.

The protein resides in the cell membrane. May act as a carbohydrate transporter. In Arabidopsis thaliana (Mouse-ear cress), this protein is Early nodulin-like protein 3.